Consider the following 839-residue polypeptide: LPS-assembly protein LptD (839 aa).

Residues 1–21 form the signal peptide; it reads MAIGITACVLSLINYQGLAYS.

This sequence belongs to the LptD family. Component of the lipopolysaccharide transport and assembly complex. Interacts with LptE and LptA.

The protein resides in the cell outer membrane. In terms of biological role, together with LptE, is involved in the assembly of lipopolysaccharide (LPS) at the surface of the outer membrane. The chain is LPS-assembly protein LptD from Legionella pneumophila (strain Lens).